We begin with the raw amino-acid sequence, 172 residues long: Outer-membrane lipoprotein carrier protein (172 aa).

A signal peptide spans 1–16 (MRIALLWVAFGALALA).

It belongs to the LolA family. In terms of assembly, monomer.

It is found in the periplasm. Functionally, participates in the translocation of lipoproteins from the inner membrane to the outer membrane. Only forms a complex with a lipoprotein if the residue after the N-terminal Cys is not an aspartate (The Asp acts as a targeting signal to indicate that the lipoprotein should stay in the inner membrane). The sequence is that of Outer-membrane lipoprotein carrier protein from Wolinella succinogenes (strain ATCC 29543 / DSM 1740 / CCUG 13145 / JCM 31913 / LMG 7466 / NCTC 11488 / FDC 602W) (Vibrio succinogenes).